We begin with the raw amino-acid sequence, 187 residues long: Auxin-binding protein T85 (187 aa).

Positions 1–20 (MARHVLVVVAVLLFATAEAS) are cleaved as a signal peptide. A disulfide bond links C22 and C177. Zn(2+) contacts are provided by H78, H80, and E84. N117 carries N-linked (GlcNAc...) asparagine glycosylation. Residue H128 participates in Zn(2+) binding. A Prevents secretion from ER motif is present at residues 184–187 (KDEL).

As to quaternary structure, homodimer.

The protein resides in the endoplasmic reticulum lumen. This is probably a receptor for the plant hormone auxin. The chain is Auxin-binding protein T85 (T85) from Nicotiana tabacum (Common tobacco).